The following is a 418-amino-acid chain: MSSAQREFEIVLYGATGFSGMLTGQHLAQRDTNARIALAGRSPQRLRAVRDKLGPLASDWPLVVADASQPATLEEMATRAQVILTTVGPYTRYGLPLVAACAKAGTDYADLTGELMFCRNSIDLYHKQAADTGARIVLACGFDSIPSDLNVHHLYRRAAEDGTGELAETNLVLRSFSQRWASGGSVATYSEAMRTASSDPEAYRLVNDPYTLTTDRSAEPDLGPQPDFSMRRGRDLAPELAGFWTGAFVQGPFNTRIVRRSNALQDWAYGKQFRYSETMSLGRSFAAPIASAAVTGAIAGGIGLGNKYFSRLPQRALERVTPKPGTGPSQKSRERGHYRCETYTTTTTGARYLATFAHNVDAYASTAVLLGESGLALALDRDRLSELRGVLTPAAAMGDALLARLPQTGVVVSATRLH.

This sequence belongs to the saccharopine dehydrogenase family. Enoyl reductase subfamily.

Involved in the reduction of the double bond between C-4 and C-5 during phthiocerol dimycocerosates (DIM A) and glycosylated phenolphthiocerol dimycocerosates (PGL) biosynthesis. In Mycobacterium ulcerans (strain Agy99), this protein is Trans-acting enoyl reductase.